We begin with the raw amino-acid sequence, 258 residues long: Global transcriptional regulator CodY (258 aa).

A GAF domain region spans residues 1 to 156; the sequence is MSTLLSKTRR…SATIVGMELL (156 aa). The H-T-H motif DNA-binding region spans 204 to 223; it reads ASKIADKVGITRSVIVNALR.

The protein belongs to the CodY family.

The protein resides in the cytoplasm. Its function is as follows. DNA-binding global transcriptional regulator which is involved in the adaptive response to starvation and acts by directly or indirectly controlling the expression of numerous genes in response to nutrient availability. During rapid exponential growth, CodY is highly active and represses genes whose products allow adaptation to nutrient depletion. The protein is Global transcriptional regulator CodY of Clostridium perfringens (strain SM101 / Type A).